The primary structure comprises 450 residues: MTASHSLALSMTKSTSPLILTLTLSLQPPLKHPRKRETFQEIQAYPNAEVISLSPKSLMATNRFFCEICNKGFQREQNLQLHKRGHNLPWKLKQKTNKNQVKKKVYICPEKSCVHHDPARALGDLTGIKKHFSRKHGEKKWKCDKCSKKYAVISDWKAHNKICGSREFRCDCGTLFSRKDSFISHRSFCDVLAEESSKFFSVPSPLAANSTIATVTDTNNPILIQSQLDQSSTGTADLNVNNNHTTLFGQKFTNSNPTQQQPNALALSSPPSPRSTSDSVHNLWKLQEEECAHQWLLNEYMNNNKNIFHKGIFKNQEDEIKKGNIYSGSNPTDGNIASLFSYNQEAVNMASFSATTLLQKVAQTGTPSSSETSTTMFGQMTSSIFNNTMLNSYCLTAKNNEEELTRDFLGVGSSEDQQRLHRHRFPSSVPLTANHDIPKLAATIVGRKQP.

Ser-54 bears the Phosphoserine mark. C2H2-type zinc fingers lie at residues 64 to 86 (FFCE…KRGH) and 106 to 136 (YICP…SRKH). The Nuclear localization signal signature appears at 128–135 (IKKHFSRK). The C2H2-type 2; degenerate zinc finger occupies 141–165 (WKCDKCSKKYAVISDWKAHNKICGS). Residues Cys-143, Cys-146, His-159, Cys-163, Cys-170, Cys-172, His-185, and Cys-189 each contribute to the Zn(2+) site. Residues 168 to 191 (FRCDCGTLFSRKDSFISHRSFCDV) form a CCHC-type 2; atypical zinc finger. The segment at 178 to 190 (RKDSFISHRSFCD) is SHR-binding. Residues 248-263 (FGQKFTNSNPTQQQPN) show a composition bias toward polar residues. The segment at 248-280 (FGQKFTNSNPTQQQPNALALSSPPSPRSTSDSV) is disordered.

Its subcellular location is the nucleus. Its function is as follows. Probable transcription factor. This is Protein indeterminate-domain 13 from Arabidopsis thaliana (Mouse-ear cress).